A 730-amino-acid polypeptide reads, in one-letter code: Elongation factor 2 (730 aa).

In terms of domain architecture, tr-type G spans 19-228 (QRIRNIGIVA…TGVSFKDVYD (210 aa)). GTP is bound by residues 28–35 (AHIDHGKT), 94–98 (DTPGH), and 148–151 (NKVD). A Diphthamide modification is found at His-596.

The protein belongs to the TRAFAC class translation factor GTPase superfamily. Classic translation factor GTPase family. EF-G/EF-2 subfamily.

It localises to the cytoplasm. Its function is as follows. Catalyzes the GTP-dependent ribosomal translocation step during translation elongation. During this step, the ribosome changes from the pre-translocational (PRE) to the post-translocational (POST) state as the newly formed A-site-bound peptidyl-tRNA and P-site-bound deacylated tRNA move to the P and E sites, respectively. Catalyzes the coordinated movement of the two tRNA molecules, the mRNA and conformational changes in the ribosome. The chain is Elongation factor 2 from Methanosarcina acetivorans (strain ATCC 35395 / DSM 2834 / JCM 12185 / C2A).